A 304-amino-acid chain; its full sequence is Oxygen-dependent coproporphyrinogen-III oxidase (304 aa).

S94 lines the substrate pocket. A divalent metal cation-binding residues include H98 and H108. Catalysis depends on H108, which acts as the Proton donor. Position 110–112 (N110–R112) interacts with substrate. A divalent metal cation-binding residues include H147 and H177. Residues Y242 to Q277 are important for dimerization. A substrate-binding site is contributed by G260–R262.

The protein belongs to the aerobic coproporphyrinogen-III oxidase family. In terms of assembly, homodimer. Requires a divalent metal cation as cofactor.

Its subcellular location is the cytoplasm. It carries out the reaction coproporphyrinogen III + O2 + 2 H(+) = protoporphyrinogen IX + 2 CO2 + 2 H2O. It functions in the pathway porphyrin-containing compound metabolism; protoporphyrin-IX biosynthesis; protoporphyrinogen-IX from coproporphyrinogen-III (O2 route): step 1/1. Functionally, involved in the heme biosynthesis. Catalyzes the aerobic oxidative decarboxylation of propionate groups of rings A and B of coproporphyrinogen-III to yield the vinyl groups in protoporphyrinogen-IX. The protein is Oxygen-dependent coproporphyrinogen-III oxidase of Shewanella amazonensis (strain ATCC BAA-1098 / SB2B).